We begin with the raw amino-acid sequence, 375 residues long: MTMAMQPQTLVIKIGTSSLARPETGQLALSTIAALVETVCKLIGQGHRVVLVSSGAIGVGCSRLGLTERPKKMALKQAIAAVGQGRLMRTYDDLFSSLRQPIAQILLTRRELIERTAYVNAYNTFQALFELGVIAIVNENDTVAIDELKFGDNDTLSALVASLVEADWLFLLTDVDRLYSSDPRLDPDAYPIPLVKAAELAQLQVRTDSTGSAWGTGGMATKITAARIATGSGVRTVITHGQKPEQILAILQGANLGTQFEAQPRSDNARKRWIAYGLVPTGKIFIDAGAVQALKARGKSLLAIGVVALEGEFSATDAVIICDPQGQELGRGLVNYNCNELEKIKGLHSEAIAAVLGYVGPDTVIHRDNLVLQEN.

Lysine 13 contributes to the ATP binding site. Substrate contacts are provided by serine 54, aspartate 141, and asparagine 153. ATP contacts are provided by residues 173–174 and 216–222; these read TD and TGGMATK. The PUA domain maps to 281–359; it reads TGKIFIDAGA…EAIAAVLGYV (79 aa).

It belongs to the glutamate 5-kinase family.

It localises to the cytoplasm. The enzyme catalyses L-glutamate + ATP = L-glutamyl 5-phosphate + ADP. Its pathway is amino-acid biosynthesis; L-proline biosynthesis; L-glutamate 5-semialdehyde from L-glutamate: step 1/2. Catalyzes the transfer of a phosphate group to glutamate to form L-glutamate 5-phosphate. This chain is Glutamate 5-kinase, found in Synechocystis sp. (strain ATCC 27184 / PCC 6803 / Kazusa).